The following is a 424-amino-acid chain: Enolase (424 aa).

Gln163 contacts (2R)-2-phosphoglycerate. Glu204 serves as the catalytic Proton donor. Mg(2+) contacts are provided by Asp241, Glu284, and Asp311. Residues Lys336, Arg365, Ser366, and Lys387 each coordinate (2R)-2-phosphoglycerate. Residue Lys336 is the Proton acceptor of the active site.

It belongs to the enolase family. Requires Mg(2+) as cofactor.

It localises to the cytoplasm. The protein localises to the secreted. The protein resides in the cell surface. It catalyses the reaction (2R)-2-phosphoglycerate = phosphoenolpyruvate + H2O. It participates in carbohydrate degradation; glycolysis; pyruvate from D-glyceraldehyde 3-phosphate: step 4/5. Its function is as follows. Catalyzes the reversible conversion of 2-phosphoglycerate (2-PG) into phosphoenolpyruvate (PEP). It is essential for the degradation of carbohydrates via glycolysis. The sequence is that of Enolase from Dictyoglomus turgidum (strain DSM 6724 / Z-1310).